Here is a 155-residue protein sequence, read N- to C-terminus: NADPH-dependent 7-cyano-7-deazaguanine reductase (155 aa).

The Thioimide intermediate role is filled by Cys53. Asp60 serves as the catalytic Proton donor. Residues 75 to 77 (VES) and 94 to 95 (HE) contribute to the substrate site.

Belongs to the GTP cyclohydrolase I family. QueF type 1 subfamily.

Its subcellular location is the cytoplasm. It catalyses the reaction 7-aminomethyl-7-carbaguanine + 2 NADP(+) = 7-cyano-7-deazaguanine + 2 NADPH + 3 H(+). The protein operates within tRNA modification; tRNA-queuosine biosynthesis. In terms of biological role, catalyzes the NADPH-dependent reduction of 7-cyano-7-deazaguanine (preQ0) to 7-aminomethyl-7-deazaguanine (preQ1). This is NADPH-dependent 7-cyano-7-deazaguanine reductase from Ruegeria pomeroyi (strain ATCC 700808 / DSM 15171 / DSS-3) (Silicibacter pomeroyi).